The sequence spans 328 residues: MTGVFDSLVADMHSTQIAASSTYHQHQQPPSGGGAGPGGNSSSSSSLHKPQESPTLPVSTATDSSYYTNQQHPAGGGGGGGSPYAHMGSYQYQASGLNNVPYSAKSSYDLGYTAAYTSYAPYGTSSSPANNEPEKEDLEPEIRIVNGKPKKVRKPRTIYSSFQLAALQRRFQKTQYLALPERAELAASLGLTQTQVKIWFQNRRSKFKKMWKSGEIPSEQHPGASASPPCASPPVSAPASWDFGVPQRMAGGGGPGSGGSGAGSSGSSPSSAASAFLGNYPWYHQTSGSASHLQATAPLLHPTQTPQPHHHHHHHGGGGAPVSAGTIF.

2 stretches are compositionally biased toward polar residues: residues 16-28 and 52-72; these read QIAASSTYHQHQQ and ESPTLPVSTATDSSYYTNQQH. 3 disordered regions span residues 16–81, 211–270, and 300–328; these read QIAA…GGGG, WKSG…SSPS, and LHPTQTPQPHHHHHHHGGGGAPVSAGTIF. A DNA-binding region (homeobox) is located at residues 152-211; that stretch reads VRKPRTIYSSFQLAALQRRFQKTQYLALPERAELAASLGLTQTQVKIWFQNRRSKFKKMW. Serine 232 bears the Phosphoserine mark. Residues 250–264 are compositionally biased toward gly residues; it reads AGGGGPGSGGSGAGS.

This sequence belongs to the distal-less homeobox family. Interacts (via homeobox DNA-binding domain) with POU4F2; this interaction enhances retinal ganglion cell (RGC) differentiation.

The protein localises to the nucleus. Acts as a transcriptional activator. Activates transcription of CGA/alpha-GSU, via binding to the downstream activin regulatory element (DARE) in the gene promoter. Plays a role in terminal differentiation of interneurons, such as amacrine and bipolar cells in the developing retina. Likely to play a regulatory role in the development of the ventral forebrain. May play a role in craniofacial patterning and morphogenesis. The sequence is that of Homeobox protein DLX-2 (DLX2) from Homo sapiens (Human).